A 420-amino-acid polypeptide reads, in one-letter code: ATP phosphoribosyltransferase regulatory subunit (420 aa).

The protein belongs to the class-II aminoacyl-tRNA synthetase family. HisZ subfamily. Heteromultimer composed of HisG and HisZ subunits.

It localises to the cytoplasm. Its pathway is amino-acid biosynthesis; L-histidine biosynthesis; L-histidine from 5-phospho-alpha-D-ribose 1-diphosphate: step 1/9. Functionally, required for the first step of histidine biosynthesis. May allow the feedback regulation of ATP phosphoribosyltransferase activity by histidine. The chain is ATP phosphoribosyltransferase regulatory subunit from Bacillus cereus (strain ZK / E33L).